The following is a 2057-amino-acid chain: Protein TIC 214 (2057 aa).

4 helical membrane passes run 13-33 (KIIN…AFSI), 62-82 (LIMG…HIAL), 158-178 (LFVT…CEFF), and 206-226 (SDYF…HSFG). Positions 248–340 (LILKGTDEEE…RVIQEKERKS (93 aa)) form a coiled coil. The segment covering 288–302 (NHLKKKKDRQKKQGT) has biased composition (basic residues). Disordered regions lie at residues 288 to 316 (NHLK…NSNT), 614 to 807 (ETHT…EEKG), 890 to 910 (DEQT…NDRV), 1597 to 1634 (EEEE…TNND), and 1724 to 1817 (KKKN…KSLS). 2 stretches are compositionally biased toward basic and acidic residues: residues 621–657 (ATDK…KETK) and 665–702 (NTVD…KETK). Polar residues predominate over residues 704-713 (NASKETNTVN). Basic and acidic residues-rich tracts occupy residues 714-807 (KETK…EEKG) and 891-900 (EQTKREEKPK). Acidic residues predominate over residues 1597–1619 (EEEEINPEEEINPEEEINPEEEI). Over residues 1622–1634 (SSNQKTPIGTNND) the composition is skewed to polar residues. Residues 1753-1817 (TNSEKKSKTN…ETDSEKKSLS (65 aa)) show a composition bias toward basic and acidic residues.

This sequence belongs to the TIC214 family. In terms of assembly, part of the Tic complex.

It localises to the plastid. The protein resides in the chloroplast inner membrane. Its function is as follows. Involved in protein precursor import into chloroplasts. May be part of an intermediate translocation complex acting as a protein-conducting channel at the inner envelope. The sequence is that of Protein TIC 214 from Ipomoea purpurea (Common morning glory).